We begin with the raw amino-acid sequence, 883 residues long: Phosphoenolpyruvate carboxylase (883 aa).

Active-site residues include His138 and Lys546.

Belongs to the PEPCase type 1 family. The cofactor is Mg(2+).

The catalysed reaction is oxaloacetate + phosphate = phosphoenolpyruvate + hydrogencarbonate. Forms oxaloacetate, a four-carbon dicarboxylic acid source for the tricarboxylic acid cycle. The chain is Phosphoenolpyruvate carboxylase from Salmonella paratyphi A (strain ATCC 9150 / SARB42).